The primary structure comprises 416 residues: Gamma-glutamyl phosphate reductase (416 aa).

This sequence belongs to the gamma-glutamyl phosphate reductase family.

The protein resides in the cytoplasm. It carries out the reaction L-glutamate 5-semialdehyde + phosphate + NADP(+) = L-glutamyl 5-phosphate + NADPH + H(+). It functions in the pathway amino-acid biosynthesis; L-proline biosynthesis; L-glutamate 5-semialdehyde from L-glutamate: step 2/2. Functionally, catalyzes the NADPH-dependent reduction of L-glutamate 5-phosphate into L-glutamate 5-semialdehyde and phosphate. The product spontaneously undergoes cyclization to form 1-pyrroline-5-carboxylate. This chain is Gamma-glutamyl phosphate reductase, found in Streptococcus thermophilus.